A 588-amino-acid chain; its full sequence is L-fucose isomerase (588 aa).

Residues glutamate 335 and aspartate 359 each act as proton acceptor in the active site. Positions 335, 359, and 525 each coordinate Mn(2+).

It belongs to the L-fucose isomerase family. Mn(2+) is required as a cofactor.

Its subcellular location is the cytoplasm. It carries out the reaction L-fucose = L-fuculose. It functions in the pathway carbohydrate degradation; L-fucose degradation; L-lactaldehyde and glycerone phosphate from L-fucose: step 1/3. In terms of biological role, converts the aldose L-fucose into the corresponding ketose L-fuculose. This Streptococcus pneumoniae (strain ATCC 700669 / Spain 23F-1) protein is L-fucose isomerase.